The chain runs to 70 residues: Large ribosomal subunit protein bL31c (70 aa).

This sequence belongs to the bacterial ribosomal protein bL31 family. Type A subfamily. As to quaternary structure, part of the 50S ribosomal subunit.

The protein localises to the plastid. It is found in the chloroplast. Its function is as follows. Binds the 23S rRNA. The protein is Large ribosomal subunit protein bL31c of Porphyra purpurea (Red seaweed).